Here is an 810-residue protein sequence, read N- to C-terminus: Eukaryotic translation initiation factor 3 subunit C (810 aa).

Positions 1–11 (MSRFFATNYNY) are enriched in polar residues. Positions 1–98 (MSRFFATNYN…DSDESDEEDG (98 aa)) are disordered. Low complexity predominate over residues 12–33 (DETSSSSEEDLLSSSEELLSSS). Positions 34 to 58 (EEGELSDDSLFNDESESESDFDSDD) are enriched in acidic residues. One can recognise a PCI domain in the interval 605-780 (YHQHINLDLV…TYIVIEKGDE (176 aa)).

The protein belongs to the eIF-3 subunit C family. In terms of assembly, component of the eukaryotic translation initiation factor 3 (eIF-3) complex.

The protein resides in the cytoplasm. In terms of biological role, component of the eukaryotic translation initiation factor 3 (eIF-3) complex, which is involved in protein synthesis of a specialized repertoire of mRNAs and, together with other initiation factors, stimulates binding of mRNA and methionyl-tRNAi to the 40S ribosome. The eIF-3 complex specifically targets and initiates translation of a subset of mRNAs involved in cell proliferation. This Candida glabrata (strain ATCC 2001 / BCRC 20586 / JCM 3761 / NBRC 0622 / NRRL Y-65 / CBS 138) (Yeast) protein is Eukaryotic translation initiation factor 3 subunit C.